The following is a 752-amino-acid chain: Pentatricopeptide repeat-containing protein At5g13270, chloroplastic (752 aa).

Residues 1–80 (MTILTVQSSF…LQEMDKAGVS (80 aa)) constitute a chloroplast transit peptide. PPR repeat units follow at residues 47–81 (QGQVENLHLVSLSKHRKLNEAFEFLQEMDKAGVSV), 82–116 (SSYSYQCLFEACRELRSLSHGRLLHDRMRMGIENP), 117–147 (SVLLQNCVLQMYCECRSLEDADKLFDEMSEL), 148–182 (NAVSRTTMISAYAEQGILDKAVGLFSGMLASGDKP), 183–217 (PSSMYTTLLKSLVNPRALDFGRQIHAHVIRAGLCS), 218–248 (NTSIETGIVNMYVKCGWLVGAKRVFDQMAVK), 249–283 (KPVACTGLMVGYTQAGRARDALKLFVDLVTEGVEW), 284–318 (DSFVFSVVLKACASLEELNLGKQIHACVAKLGLES), 319–349 (EVSVGTPLVDFYIKCSSFESACRAFQEIREP), 350–384 (NDVSWSAIISGYCQMSQFEEAVKTFKSLRSKNASI), 386–420 (NSFTYTSIFQACSVLADCNIGGQVHADAIKRSLIG), 421–451 (SQYGESALITMYSKCGCLDDANEVFESMDNP), 452–486 (DIVAWTAFISGHAYYGNASEALRLFEKMVSCGMKP), 487–522 (NSVTFIAVLTACSHAGLVEQGKHCLDTMLRKYNVAP), and 523–553 (TIDHYDCMIDIYARSGLLDEALKFMKNMPFE). The segment at 558 to 633 (SWKCFLSGCW…ELSCSWIQEK (76 aa)) is type E motif. Residues 634–664 (GKIHRFIVGDKHHPQTQEIYEKLKEFDGFME) are type E(+) motif. Residues 665–752 (GDMFQCNMTE…EGKCSCNDYW (88 aa)) are type DYW motif.

It belongs to the PPR family. PCMP-H subfamily.

Its subcellular location is the plastid. The protein localises to the chloroplast. The polypeptide is Pentatricopeptide repeat-containing protein At5g13270, chloroplastic (PCMP-H90) (Arabidopsis thaliana (Mouse-ear cress)).